Here is a 241-residue protein sequence, read N- to C-terminus: Proteasome subunit alpha type-5 (241 aa).

N-acetylmethionine is present on M1. S16 carries the phosphoserine modification. Position 55 is a phosphothreonine (T55). A phosphoserine mark is found at S56 and S63. A glycan (O-linked (GlcNAc) serine) is linked at S198.

Belongs to the peptidase T1A family. In terms of assembly, the 26S proteasome consists of a 20S proteasome core and two 19S regulatory subunits. The 20S proteasome core is a barrel-shaped complex made of 28 subunits that are arranged in four stacked rings. The two outer rings are each formed by seven alpha subunits, and the two inner rings are formed by seven beta subunits. The proteolytic activity is exerted by three beta-subunits PSMB5, PSMB6 and PSMB7. PSMA5 interacts directly with the PSMG1-PSMG2 heterodimer which promotes 20S proteasome assembly.

It is found in the cytoplasm. The protein localises to the nucleus. In terms of biological role, component of the 20S core proteasome complex involved in the proteolytic degradation of most intracellular proteins. This complex plays numerous essential roles within the cell by associating with different regulatory particles. Associated with two 19S regulatory particles, forms the 26S proteasome and thus participates in the ATP-dependent degradation of ubiquitinated proteins. The 26S proteasome plays a key role in the maintenance of protein homeostasis by removing misfolded or damaged proteins that could impair cellular functions, and by removing proteins whose functions are no longer required. Associated with the PA200 or PA28, the 20S proteasome mediates ubiquitin-independent protein degradation. This type of proteolysis is required in several pathways including spermatogenesis (20S-PA200 complex) or generation of a subset of MHC class I-presented antigenic peptides (20S-PA28 complex). The sequence is that of Proteasome subunit alpha type-5 (PSMA5) from Bos taurus (Bovine).